Reading from the N-terminus, the 427-residue chain is Flavohemoprotein (427 aa).

One can recognise a Globin domain in the interval 30–168 (ELNESQKQYI…LAKILIDSEK (139 aa)). His-114 contacts heme b. Active-site charge relay system residues include Tyr-124 and Glu-167. Residues 176–427 (WNGFVEFKVT…QSEFFGPYIP (252 aa)) form a reductase region. Positions 177–285 (NGFVEFKVTE…SPPAGNFVYK (109 aa)) constitute an FAD-binding FR-type domain. FAD is bound by residues Tyr-216 and 232–235 (REYS). 301–306 (GIGITP) is an NADP(+) binding site. 421-424 (FFGP) serves as a coordination point for FAD.

It belongs to the globin family. Two-domain flavohemoproteins subfamily. In the C-terminal section; belongs to the flavoprotein pyridine nucleotide cytochrome reductase family. FAD is required as a cofactor. The cofactor is heme b.

The protein resides in the cytoplasm. Its subcellular location is the nucleus. The enzyme catalyses 2 nitric oxide + NADPH + 2 O2 = 2 nitrate + NADP(+) + H(+). It carries out the reaction 2 nitric oxide + NADH + 2 O2 = 2 nitrate + NAD(+) + H(+). In terms of biological role, is involved in NO detoxification in an aerobic process, termed nitric oxide dioxygenase (NOD) reaction that utilizes O(2) and NAD(P)H to convert NO to nitrate, which protects the fungus from various noxious nitrogen compounds. Therefore, plays a central role in the inducible response to nitrosative stress. Functionally, in the presence of oxygen and NADH, it has NADH oxidase activity, which leads to the generation of superoxide and H(2)O(2). Under anaerobic conditions, it also exhibits nitric oxide reductase and FAD reductase activities. However, all these reactions are much lower than NOD activity. The protein is Flavohemoprotein of Schizosaccharomyces pombe (strain 972 / ATCC 24843) (Fission yeast).